A 687-amino-acid chain; its full sequence is DnaJ protein ERDJ2A (687 aa).

Residues 1 to 8 (MAASEENS) lie on the Lumenal side of the membrane. Residues 9-29 (ALFPIFILTIMAIPLVPYTMV) form a helical membrane-spanning segment. Residues 30 to 65 (KLSGALSKKQRTIHCQCLECDRSGKYKRSLFKKISN) are Cytoplasmic-facing. Residues 66–86 (FSTWSNLTLVLLWVVMIFLIY) form a helical membrane-spanning segment. Residues 87-190 (YTKNMSREAQ…FLLDIDGASG (104 aa)) are Lumenal-facing. A glycan (N-linked (GlcNAc...) asparagine) is linked at Asn-90. One can recognise a J domain in the interval 99-164 (DPFSILGLEP…VSRENFEKYG (66 aa)). Residues 191-211 (GILLLWIVGVCILLPLVIAVI) traverse the membrane as a helical segment. The region spanning 205–603 (PLVIAVIYLS…IGCDKKQALK (399 aa)) is the SEC63 domain. Residues 212–687 (YLSRSSKYTG…SSEESGSEEE (476 aa)) are Cytoplasmic-facing. The tract at residues 619–687 (SDEGAIAEEG…SSEESGSEEE (69 aa)) is disordered. Positions 623 to 654 (AIAEEGMEEEDEIEEEDYDDDYESEYSEDEDE) are enriched in acidic residues.

As to quaternary structure, interacts with OEP61/TPR7. As to expression, expressed in leaves, flower buds and flowers.

Its subcellular location is the endoplasmic reticulum membrane. Functionally, required for integral membrane and secreted preprotein translocation across the endoplasmic reticulum membrane. The protein is DnaJ protein ERDJ2A (ERDJ2A) of Arabidopsis thaliana (Mouse-ear cress).